The chain runs to 455 residues: Membrane protein Pbs54 (455 aa).

The helical transmembrane segment at 12-32 (IISIIILILRISLFSCAEHLF) threads the bilayer. 3 N-linked (GlcNAc...) asparagine glycosylation sites follow: N41, N102, and N125. The next 6 membrane-spanning stretches (helical) occupy residues 181 to 201 (IFLI…LFNG), 220 to 240 (FIFF…LSCI), 244 to 264 (ILTF…FYLF), 285 to 305 (ILIG…IIFI), 312 to 332 (FLVK…IFFL), and 346 to 366 (FVFS…FWNI). N-linked (GlcNAc...) asparagine glycosylation occurs at N373. Residues 398–418 (NMFALFMIFAMSILSIIFPRI) form a helical membrane-spanning segment.

The protein resides in the cell projection. Its subcellular location is the cilium. The protein localises to the flagellum. It localises to the cell membrane. Plays a role in gamete fertilization. Required for the successful transmission of parasites to mosquito. This chain is Membrane protein Pbs54, found in Plasmodium berghei (strain Anka).